A 141-amino-acid chain; its full sequence is Methylglyoxal synthase (141 aa).

The 141-residue stretch at 1–141 folds into the MGS-like domain; that stretch reads MNIALIAHDK…PKLQKNKSDK (141 aa). Substrate-binding positions include His8, Lys12, and 34–37; that span reads TGTT. Residue Asp60 is the Proton donor/acceptor of the active site. A substrate-binding site is contributed by His87.

It belongs to the methylglyoxal synthase family.

It catalyses the reaction dihydroxyacetone phosphate = methylglyoxal + phosphate. Its function is as follows. Catalyzes the formation of methylglyoxal from dihydroxyacetone phosphate. This is Methylglyoxal synthase from Caldicellulosiruptor bescii (strain ATCC BAA-1888 / DSM 6725 / KCTC 15123 / Z-1320) (Anaerocellum thermophilum).